The chain runs to 258 residues: Allene oxide cyclase 3, chloroplastic (258 aa).

The N-terminal 56 residues, 1 to 56, are a transit peptide targeting the chloroplast; sequence MASSSAAMSLESISMTTLNNLSRNHQSHRSSLLGFSRSFQNLGISSNGPDFSSRSR.

This sequence belongs to the allene oxide cyclase family. In terms of tissue distribution, highly expressed in fully developed leaves.

The protein localises to the plastid. The protein resides in the chloroplast. The enzyme catalyses (9Z,13S,15Z)-12,13-epoxyoctadeca-9,11,15-trienoate = (9S,13S,15Z)-12-oxophyto-10,15-dienoate. Functionally, involved in the production of 12-oxo-phytodienoic acid (OPDA), a precursor of jasmonic acid. This Arabidopsis thaliana (Mouse-ear cress) protein is Allene oxide cyclase 3, chloroplastic (AOC3).